We begin with the raw amino-acid sequence, 890 residues long: Nucleoside hydrolase 3 (890 aa).

The signal sequence occupies residues 1–21 (MLTSPTLKSLWFLFTILGLLG). Asparagine 55, asparagine 232, asparagine 371, asparagine 485, asparagine 580, asparagine 655, and asparagine 740 each carry an N-linked (GlcNAc...) asparagine glycan.

It belongs to the IUNH family.

It is found in the secreted. It localises to the extracellular space. The protein resides in the apoplast. It catalyses the reaction a purine D-ribonucleoside + H2O = a purine nucleobase + D-ribose. The enzyme catalyses inosine + H2O = hypoxanthine + D-ribose. The catalysed reaction is adenosine + H2O = D-ribose + adenine. Functionally, extracellular purine-specific hydrolase present in the apoplastic fluid involved in the degradation of extracellular nucleosides, including inosine and adenosine, and which may participate in wound and pathogen responses (e.g. Botrytis cinerea). This Arabidopsis thaliana (Mouse-ear cress) protein is Nucleoside hydrolase 3.